A 491-amino-acid polypeptide reads, in one-letter code: Glutamyl-tRNA(Gln) amidotransferase subunit A (491 aa).

Catalysis depends on charge relay system residues lysine 79 and serine 154. Serine 178 functions as the Acyl-ester intermediate in the catalytic mechanism.

This sequence belongs to the amidase family. GatA subfamily. Heterotrimer of A, B and C subunits.

The catalysed reaction is L-glutamyl-tRNA(Gln) + L-glutamine + ATP + H2O = L-glutaminyl-tRNA(Gln) + L-glutamate + ADP + phosphate + H(+). Allows the formation of correctly charged Gln-tRNA(Gln) through the transamidation of misacylated Glu-tRNA(Gln) in organisms which lack glutaminyl-tRNA synthetase. The reaction takes place in the presence of glutamine and ATP through an activated gamma-phospho-Glu-tRNA(Gln). This Alkaliphilus metalliredigens (strain QYMF) protein is Glutamyl-tRNA(Gln) amidotransferase subunit A.